A 134-amino-acid chain; its full sequence is Putative nickel-responsive regulator (134 aa).

Ni(2+) is bound by residues histidine 78, histidine 89, histidine 91, and cysteine 97.

This sequence belongs to the transcriptional regulatory CopG/NikR family. The cofactor is Ni(2+).

Its function is as follows. Transcriptional regulator. The chain is Putative nickel-responsive regulator from Chlorobium limicola (strain DSM 245 / NBRC 103803 / 6330).